Reading from the N-terminus, the 374-residue chain is tRNA-specific 2-thiouridylase MnmA (374 aa).

ATP contacts are provided by residues 12-19 (GMSGGVDS) and methionine 38. Residues 98-100 (NPD) are interaction with target base in tRNA. Cysteine 103 functions as the Nucleophile in the catalytic mechanism. Cysteines 103 and 202 form a disulfide. ATP is bound at residue glycine 128. Positions 152–154 (KDQ) are interaction with tRNA. Cysteine 202 serves as the catalytic Cysteine persulfide intermediate. Residues 316-317 (RY) form an interaction with tRNA region.

This sequence belongs to the MnmA/TRMU family.

The protein resides in the cytoplasm. It carries out the reaction S-sulfanyl-L-cysteinyl-[protein] + uridine(34) in tRNA + AH2 + ATP = 2-thiouridine(34) in tRNA + L-cysteinyl-[protein] + A + AMP + diphosphate + H(+). In terms of biological role, catalyzes the 2-thiolation of uridine at the wobble position (U34) of tRNA, leading to the formation of s(2)U34. The protein is tRNA-specific 2-thiouridylase MnmA of Vibrio campbellii (strain ATCC BAA-1116).